The sequence spans 335 residues: Probable pectinesterase 29 (335 aa).

Residues 1–24 (MGTHRIFIGLIALCCFCLPHLIEA) form the signal peptide. Asn43 is a glycosylation site (N-linked (GlcNAc...) asparagine). Catalysis depends on Asp166, which acts as the Proton donor. The active-site Nucleophile is the Asp187. Substrate contacts are provided by Arg248 and Trp250. A glycan (N-linked (GlcNAc...) asparagine) is linked at Asn262.

This sequence belongs to the pectinesterase family. Expressed in flower buds.

The protein resides in the secreted. The protein localises to the cell wall. The enzyme catalyses [(1-&gt;4)-alpha-D-galacturonosyl methyl ester](n) + n H2O = [(1-&gt;4)-alpha-D-galacturonosyl](n) + n methanol + n H(+). The protein operates within glycan metabolism; pectin degradation; 2-dehydro-3-deoxy-D-gluconate from pectin: step 1/5. Acts in the modification of cell walls via demethylesterification of cell wall pectin. The sequence is that of Probable pectinesterase 29 (PME29) from Arabidopsis thaliana (Mouse-ear cress).